Here is a 1042-residue protein sequence, read N- to C-terminus: MVDALNLGKILRVHATVYVAAEPVPLFWPMRTFIYNNPLHGLEGLPFTEAVQAARGLFHARVYLPRTTYQHYLREGKGDVRMLDAITAQFAQTAPSIDGIDWQRWLSAVRKAPTDASPYVPHASAEDVAAVLAGQAIPNGSAIAAGLDAAMLADLPPWRPLTECIDSLWGTNLAAELDELVVKSCLDFFDEDQSSWRMPGRKQGFYAAWADVARRNGRMFLRGLAIKRILDQAPRADAAIVHVMQSLGIAEEHWQAYFSRELLRLHGWAGFIRWRSGAEHYHWGRKHPADLVDFLAVRLVFALALIEESARHRKTPANRPAFDAFLREQRDCALLRYALHAGELLPGWAQRIDDALERSSGNRIARLAEDYAKEWRRVHAQRQGQILQKIAMEAGTPVQTLAALGAQGAAEVLEVLQRFAVQEGSMWLRALEARAIDHLLSQIVTPDEPAVPKRAFAQALFCIDVRSERLRRNLENVGDFLTFGIAGFFGVPVGFLGYGKGSETHLCPAIVTPKNLVLEISAAIDFDEEDFVSTLGHVLHDLKSSVISPFVTVEAIGALFGFDLIGKTMAPLAYHRWRSRLDAPHPFTHLLLDKLSREQADSIVRALQRAMIVNALRIELGIERERVNDDMIRELRETALGHCSGTTILVREFGLSLEREARFIEQVREVYRVNSSYANYQMLRLGRIGFSLDEQVNYVWTALTSIGLTRNFSRFVLLIGHGSHSENNPYESALDCGACGGSNGLVSARVLAQMANKAEVRAKLRTIGVDIPADTWFVPGLHTTTTDTVELYNLDFLPPRLLVYLERLRNGLYAASRLSAAERVPTLLPQAKTLKPAQAHRIVRVMSHDWSQVRPEWGLSGNLYFVVGRRGLTQKANLHGRSFLQSYDWQLDPKGRLLENILAGPVVVGQWINMEHYFSTVDNTHFGSGSKVYHNVAGRFGVMTGNLSDLRTGLPAQTVMRHGQPYHEPLRLIVMIEAPLDFARRAIEAVAKVKSLVQGQWVRTIILDPTQDMQAYVFDDGEWQVHFISASQSTYTEEVVTA.

Residues cysteine 462, aspartate 464, histidine 721, and cysteine 736 each contribute to the Zn(2+) site.

This sequence belongs to the inorganic carbon transporter (TC 9.A.2) DabA family. As to quaternary structure, forms a complex with DabB. Requires Zn(2+) as cofactor.

The protein localises to the cell inner membrane. In terms of biological role, part of an energy-coupled inorganic carbon pump. This Nitrosomonas eutropha (strain DSM 101675 / C91 / Nm57) protein is Probable inorganic carbon transporter subunit DabA.